The primary structure comprises 347 residues: Quinolinate synthase (347 aa).

Iminosuccinate is bound by residues H47 and S68. A [4Fe-4S] cluster-binding site is contributed by C113. Iminosuccinate-binding positions include 139-141 (YAN) and S156. C200 is a binding site for [4Fe-4S] cluster. Residues 226 to 228 (HPE) and T243 each bind iminosuccinate. C297 contacts [4Fe-4S] cluster.

The protein belongs to the quinolinate synthase family. Type 1 subfamily. [4Fe-4S] cluster serves as cofactor.

It is found in the cytoplasm. It carries out the reaction iminosuccinate + dihydroxyacetone phosphate = quinolinate + phosphate + 2 H2O + H(+). The protein operates within cofactor biosynthesis; NAD(+) biosynthesis; quinolinate from iminoaspartate: step 1/1. In terms of biological role, catalyzes the condensation of iminoaspartate with dihydroxyacetone phosphate to form quinolinate. This is Quinolinate synthase from Salmonella gallinarum (strain 287/91 / NCTC 13346).